The chain runs to 146 residues: Cytochrome c oxidase assembly factor 1 homolog (146 aa).

At 1–14 (MMWQKYAGSRRSMP) the chain is on the mitochondrial matrix side. Residues 15–37 (LGARILFHGVFYAGGFAIVYYLI) form a helical membrane-spanning segment. Residues 38–146 (QKFHSRALYY…GENGDEVKKE (109 aa)) lie on the Mitochondrial intermembrane side of the membrane.

This sequence belongs to the COA1 family. In terms of assembly, component of the MITRAC (mitochondrial translation regulation assembly intermediate of cytochrome c oxidase complex) complex, the core components of this complex being COA3/MITRAC12 and COX14. Interacts with COX17 and COA6. Part of the mitochondrial complex I assembly/MCIA complex that comprises at least the core subunits TMEM126B, NDUFAF1, ECSIT and ACAD9 and complement subunits such as COA1 and TMEM186.

The protein resides in the mitochondrion inner membrane. Functionally, component of the MITRAC (mitochondrial translation regulation assembly intermediate of cytochrome c oxidase complex) complex, that regulates cytochrome c oxidase assembly. MITRAC complexes regulate both translation of mitochondrial encoded components and assembly of nuclear-encoded components imported in mitochondrion. Required for assembly of mitochondrial respiratory chain complex I and complex IV. As part of the MCIA complex, required for efficient assembly of the mitochondrial complex I. The protein is Cytochrome c oxidase assembly factor 1 homolog of Homo sapiens (Human).